Here is a 194-residue protein sequence, read N- to C-terminus: Fe/S biogenesis protein NfuA (194 aa).

2 residues coordinate [4Fe-4S] cluster: Cys151 and Cys154.

Belongs to the NfuA family. In terms of assembly, homodimer. It depends on [4Fe-4S] cluster as a cofactor.

Functionally, involved in iron-sulfur cluster biogenesis. Binds a 4Fe-4S cluster, can transfer this cluster to apoproteins, and thereby intervenes in the maturation of Fe/S proteins. Could also act as a scaffold/chaperone for damaged Fe/S proteins. The protein is Fe/S biogenesis protein NfuA of Aliivibrio salmonicida (strain LFI1238) (Vibrio salmonicida (strain LFI1238)).